A 317-amino-acid chain; its full sequence is uncharacterized protein (317 aa).

Over residues 68-78 the composition is skewed to low complexity; it reads DSTNTDISNET. Residues 68 to 87 form a disordered region; the sequence is DSTNTDISNETPILSNNTPI.

This is an uncharacterized protein from Methanocaldococcus jannaschii (strain ATCC 43067 / DSM 2661 / JAL-1 / JCM 10045 / NBRC 100440) (Methanococcus jannaschii).